The primary structure comprises 926 residues: Alpha-L-rhamnosidase (926 aa).

The N-terminal stretch at 1–25 (MILHKSVFKSYIYVLTYFVFFSVMS) is a signal peptide. The N-palmitoyl cysteine moiety is linked to residue cysteine 26. Cysteine 26 carries S-diacylglycerol cysteine lipidation. Residues aspartate 504, 508–510 (RDE), aspartate 517, and tryptophan 569 contribute to the alpha-L-rhamnose site. Residue glutamate 510 is the Proton donor of the active site. The active-site Proton acceptor is glutamate 779. Histidine 800 lines the alpha-L-rhamnose pocket.

It belongs to the glycosyl hydrolase 78 family.

The protein localises to the cell membrane. The enzyme catalyses Hydrolysis of terminal non-reducing alpha-L-rhamnose residues in alpha-L-rhamnosides.. Functionally, alpha-L-rhamnosidase involved in ulvan degradation. Ulvan is the main polysaccharide component of the Ulvales (green seaweed) cell wall. It is composed of disaccharide building blocks comprising 3-sulfated rhamnose (Rha3S) linked to D-glucuronic acid (GlcA), L-iduronic acid (IduA), or D-xylose (Xyl). Alpha-L-rhamnosidase converts Rha-Xyl-Rha3S, the product of a sulfatase acting on Rha3S-Xyl-Rha3S oligosaccharides, to Rha and Xyl-Rha3S. The enzyme is able to degrade p-nitrophenyl-alpha-L-rhamnopyranoside (PNP-Rha) in vitro. In Formosa agariphila (strain DSM 15362 / KCTC 12365 / LMG 23005 / KMM 3901 / M-2Alg 35-1), this protein is Alpha-L-rhamnosidase.